Here is a 106-residue protein sequence, read N- to C-terminus: Glutaredoxin-1 (106 aa).

N-acetylalanine is present on Ala-1. One can recognise a Glutaredoxin domain in the interval 2 to 105; it reads QEFVNSKIQP…ARLKEMGALR (104 aa). The residue at position 8 (Lys-8) is an N6-succinyllysine. 2 disulfide bridges follow: Cys-22-Cys-25 and Cys-78-Cys-82.

This sequence belongs to the glutaredoxin family.

The protein localises to the cytoplasm. Functionally, has a glutathione-disulfide oxidoreductase activity in the presence of NADPH and glutathione reductase. Reduces low molecular weight disulfides and proteins. The chain is Glutaredoxin-1 (GLRX) from Oryctolagus cuniculus (Rabbit).